The following is a 671-amino-acid chain: NADPH--cytochrome P450 reductase (671 aa).

Topologically, residues 1–14 (MSAEHVEEVVSEEP) are lumenal. The helical transmembrane segment at 15–35 (FLGTLDIALLVVLLVGATWYF) threads the bilayer. The Cytoplasmic segment spans residues 36–671 (MRSRKKEEAP…QKRYSADVWS (636 aa)). Residues 77–221 (LVVFYGSQTG…DFITWKDRFW (145 aa)) enclose the Flavodoxin-like domain. Residues 83 to 88 (SQTGTA), 135 to 138 (ATYG), 170 to 179 (LGNKTYEHYN), and D205 each bind FMN. The region spanning 276–515 (KNPFLASVIV…FIRKSQFRLP (240 aa)) is the FAD-binding FR-type domain. R295 is an NADP(+) binding site. FAD contacts are provided by residues 451–454 (RYYS), 469–471 (TAV), Y475, and 485–488 (GVAT). Residues T529, 589-590 (SR), 595-599 (KIYVT), and D632 contribute to the NADP(+) site. An FAD-binding site is contributed by W670.

This sequence belongs to the NADPH--cytochrome P450 reductase family. In the N-terminal section; belongs to the flavodoxin family. The protein in the C-terminal section; belongs to the flavoprotein pyridine nucleotide cytochrome reductase family. FAD is required as a cofactor. FMN serves as cofactor.

Its subcellular location is the endoplasmic reticulum membrane. The enzyme catalyses 2 oxidized [cytochrome P450] + NADPH = 2 reduced [cytochrome P450] + NADP(+) + H(+). This enzyme is required for electron transfer from NADP to cytochrome P450 in microsomes. It can also provide electron transfer to heme oxygenase and cytochrome B5. This is NADPH--cytochrome P450 reductase from Musca domestica (House fly).